The sequence spans 259 residues: Formate channel BtFdhC (259 aa).

Residues 1-26 (MAFHKPEQIAELVIEAGVQKVSQTLP) are Cytoplasmic-facing. The chain crosses the membrane as a helical span at residues 27–47 (AMLILGFLGGAFISLGFLLNI). The Periplasmic portion of the chain corresponds to 48–66 (RVLGNLPERWGSLVNVLGG). A helical transmembrane segment spans residues 67 to 97 (AVFPVGLMLVVLAGGELITGNMMSLSMALYA). Residues 98–108 (KKITLVSVLNN) lie on the Cytoplasmic side of the membrane. A helical membrane pass occupies residues 109–130 (WVWITFMNFVGAIFVAYCFGHL). Residues 131-157 (GGLTEGDYLNKTVAIAEGKLHESFGRT) are Periplasmic-facing. The chain crosses the membrane as a helical span at residues 158–176 (LILAIGCNWLVCLALWLAY). Residues 177 to 187 (GTSDFVGKIIG) are Cytoplasmic-facing. A helical membrane pass occupies residues 188 to 216 (IWIPIMAFVVIGFQQVVANMFVISAVIFA). The Periplasmic portion of the chain corresponds to 217 to 227 (GHLTWMDLARN). Residues 228–250 (FVPVFIGNVIGGAGFVGFAYFAC) traverse the membrane as a helical segment. The Cytoplasmic portion of the chain corresponds to 251–259 (YQKQHSNMK).

It belongs to the FNT transporter (TC 1.A.16) family.

It is found in the cell inner membrane. It carries out the reaction formate(in) = formate(out). Acts as a formate transporter. The chain is Formate channel BtFdhC from Bacillus thuringiensis.